Here is a 145-residue protein sequence, read N- to C-terminus: MTDTRHMYGGPGFGHYQGFGIGHPGYGMQSTGYPGYGMYGGHPGYGMQGYPDHGIHGGVGGYPGYGGYGGYPSGGYGGSPGTGSYPSMHHENDGHHHYYHHHHDGKDNLHHHHHHVGKDNHHHHHDGHYGHHHHHMGHWGKDGYK.

PG repeat units lie at residues 9–15, 22–28, 32–38, and 41–47; these read GGPGFGH, GHPGYGM, and GYPGYGM. GGY repeat units lie at residues 57–63, 66–72, and 74–80; these read GGVGGYP, GGYGGYP, and GGYGGSP. H4 repeat units follow at residues 99–105, 111–117, 121–127, and 131–137; these read YHHHHDG, HHHHHVG, HHHHHDG, and HHHHHMG. A compositionally biased stretch (basic residues) spans 100–138; that stretch reads HHHHDGKDNLHHHHHHVGKDNHHHHHDGHYGHHHHHMGH. Residues 100-145 form a disordered region; sequence HHHHDGKDNLHHHHHHVGKDNHHHHHDGHYGHHHHHMGHWGKDGYK.

The protein resides in the spore coat. In terms of biological role, part of the spore coat. In Bacillus subtilis (strain 168), this protein is Spore coat protein YeeK (yeeK).